Consider the following 202-residue polypeptide: MEAEAGGLEELTDEEMAALGKEELVRRLRREEAARLAALVQRGRLMQEVNRQLQGHLGEIRELKQLNRRLQAENRELRDLCCFLDSERQRGRRAARQWQLFGTQASRAVREDLGGCWQKLAELEGRQEELLRENLALKELCLALGEEWGPRGGPSGAGGSGAGPAPELALPPCGPRDLGDGSSSTGSVGSPDQLPLACSPDD.

At M1 the chain carries N-acetylmethionine. Coiled coils occupy residues 43 to 90 (GRLM…ERQR) and 118 to 147 (QKLA…LGEE). Positions 148–202 (WGPRGGPSGAGGSGAGPAPELALPPCGPRDLGDGSSSTGSVGSPDQLPLACSPDD) are disordered. Over residues 150–162 (PRGGPSGAGGSGA) the composition is skewed to gly residues. Residues 180-190 (DGSSSTGSVGS) are compositionally biased toward low complexity.

Belongs to the CCDC85 family. In terms of assembly, interacts with CEBPB. Interacts with EURL. May interact with CEBPD. Interacts with MCRS1. Interacts with TCF7L2; competes with CTNNB1. Interacts with ANKRD26. Interacts with the beta-catenin family proteins ARVCF, CTNND1, CTNND2 and PKP4. (Microbial infection) Interacts with the viral phosphoprotein hepatitis delta antigen (HDAG); this interaction affects hepatitis delta virus (HDV) genomic replication in intact cells. In terms of tissue distribution, widely expressed including liver.

It is found in the nucleus. Its subcellular location is the cytoplasm. The protein localises to the cytoskeleton. It localises to the microtubule organizing center. The protein resides in the centrosome. It is found in the cell junction. Its subcellular location is the adherens junction. Functionally, functions as a transcriptional repressor. May inhibit the activity of CTNNB1 in a TP53-dependent manner and thus regulate cell growth. May function in adipocyte differentiation, negatively regulating mitotic clonal expansion. Plays a role in cell-cell adhesion and epithelium development through its interaction with proteins of the beta-catenin family. (Microbial infection) Plays a role in hepatitis delta virus (HDV) genomic replication. This Homo sapiens (Human) protein is Coiled-coil domain-containing protein 85B (CCDC85B).